The chain runs to 59 residues: Mitochondrial sheath formation-associated protein (59 aa).

The Mitochondrial intermembrane segment spans residues 1-6; that stretch reads MIVLGW. The next 2 membrane-spanning stretches (helical) occupy residues 2 to 22 and 7 to 23; these read IVLG…FPEL and MFFV…PELM. The Cytoplasmic portion of the chain corresponds to 24–40; sequence PPTLKWQERWPVQESKT.

As to quaternary structure, interacts with VDAC3.

The protein resides in the mitochondrion outer membrane. Its function is as follows. Regulates sperm development. May be involved in mitochondrial sheath formation. The chain is Mitochondrial sheath formation-associated protein from Homo sapiens (Human).